The sequence spans 484 residues: tRNA sulfurtransferase (484 aa).

In terms of domain architecture, THUMP spans 63–167 (QAFGERLACI…GDKLYMVTKR (105 aa)). ATP is bound by residues 185–186 (LI), lysine 267, glycine 289, and glutamine 298. A disulfide bond links cysteine 346 and cysteine 458. The Rhodanese domain occupies 406 to 484 (IDTNEVVIDI…GYHNVKVYRP (79 aa)). The active-site Cysteine persulfide intermediate is cysteine 458.

The protein belongs to the ThiI family.

It localises to the cytoplasm. The catalysed reaction is [ThiI sulfur-carrier protein]-S-sulfanyl-L-cysteine + a uridine in tRNA + 2 reduced [2Fe-2S]-[ferredoxin] + ATP + H(+) = [ThiI sulfur-carrier protein]-L-cysteine + a 4-thiouridine in tRNA + 2 oxidized [2Fe-2S]-[ferredoxin] + AMP + diphosphate. The enzyme catalyses [ThiS sulfur-carrier protein]-C-terminal Gly-Gly-AMP + S-sulfanyl-L-cysteinyl-[cysteine desulfurase] + AH2 = [ThiS sulfur-carrier protein]-C-terminal-Gly-aminoethanethioate + L-cysteinyl-[cysteine desulfurase] + A + AMP + 2 H(+). The protein operates within cofactor biosynthesis; thiamine diphosphate biosynthesis. Functionally, catalyzes the ATP-dependent transfer of a sulfur to tRNA to produce 4-thiouridine in position 8 of tRNAs, which functions as a near-UV photosensor. Also catalyzes the transfer of sulfur to the sulfur carrier protein ThiS, forming ThiS-thiocarboxylate. This is a step in the synthesis of thiazole, in the thiamine biosynthesis pathway. The sulfur is donated as persulfide by IscS. The protein is tRNA sulfurtransferase of Shewanella sp. (strain MR-4).